We begin with the raw amino-acid sequence, 71 residues long: Protein translocase subunit SecE (71 aa).

Residues valine 43–threonine 63 traverse the membrane as a helical segment.

Belongs to the SecE/SEC61-gamma family. As to quaternary structure, component of the Sec protein translocase complex. Heterotrimer consisting of SecY (alpha), SecG (beta) and SecE (gamma) subunits. The heterotrimers can form oligomers, although 1 heterotrimer is thought to be able to translocate proteins. Interacts with the ribosome. May interact with SecDF, and other proteins may be involved.

It localises to the cell membrane. Essential subunit of the Sec protein translocation channel SecYEG. Clamps together the 2 halves of SecY. May contact the channel plug during translocation. The sequence is that of Protein translocase subunit SecE from Methanosarcina barkeri (strain Fusaro / DSM 804).